Reading from the N-terminus, the 387-residue chain is MSSFAVNILENPRLSSLPSPCFVLEEELLQQNLAIFERLQQSAPIEVMLALKGFALFPCFPWLRSGLAGASASSLWEARLAAEEFGKEVHVYAPTYRPDDLPAIIPLASHITFNSLGQWHRYRESLKNTAVKAGLRINPEYSPVQTDLYNPCVSGSRLGVQAAMLAGNLPSGITGFLSHNLCESDHLALEKTLGQIEKLFGEYLPQIEWLNLGGGHLMTSQGYDMDYAIAVIGEFHQRHPHLRLIMEPGSAIAWQTGFLLSTVEDLIETPEFTHAMLDVSFTAHMPDCLEMPYRPEVRGARVPQTGDTVYRLGGSSCLAGDFLGDYAFDQPLQVGDRLIFEDMMHYTMVKTTTFNGVHHPAIGCLRRSGEFELWRTFGYEDYRNRLG.

N6-(pyridoxal phosphate)lysine is present on lysine 52.

The protein belongs to the Orn/Lys/Arg decarboxylase class-II family. Pyridoxal 5'-phosphate serves as cofactor.

The catalysed reaction is N(1)-[(S)-3-amino-3-carboxypropyl]agmatine + H(+) = N(1)-(3-aminopropyl)agmatine + CO2. It functions in the pathway amine and polyamine biosynthesis; spermidine biosynthesis. Its function is as follows. Decarboxylase involved in the biosynthesis of spermidine via the carboxyaminopropylagmatine (CAPA) pathway. Catalyzes the decarboxylation of CAPA to form aminopropylagmatine (APA). Can also decarboxylate carboxyspermidine and carboxynorspermidine, but not ornithine, arginine, lysine and meso-diaminopimelate. This is Carboxyaminopropylagmatine decarboxylase from Synechocystis sp. (strain ATCC 27184 / PCC 6803 / Kazusa).